The chain runs to 178 residues: Dual-action ribosomal maturation protein DarP (178 aa).

A compositionally biased stretch (polar residues) spans 1 to 14; it reads MTVSDHPQTVSQPD. The interval 1–25 is disordered; that stretch reads MTVSDHPQTVSQPDPESESRPSKTR.

Belongs to the DarP family.

The protein resides in the cytoplasm. Its function is as follows. Member of a network of 50S ribosomal subunit biogenesis factors which assembles along the 30S-50S interface, preventing incorrect 23S rRNA structures from forming. Promotes peptidyl transferase center (PTC) maturation. The chain is Dual-action ribosomal maturation protein DarP from Nitrosomonas europaea (strain ATCC 19718 / CIP 103999 / KCTC 2705 / NBRC 14298).